The primary structure comprises 732 residues: Catalase-peroxidase (732 aa).

The disordered stretch occupies residues M1 to N24. Positions W96–Y219 form a cross-link, tryptophyl-tyrosyl-methioninium (Trp-Tyr) (with M-245). H97 (proton acceptor) is an active-site residue. Positions Y219–M245 form a cross-link, tryptophyl-tyrosyl-methioninium (Tyr-Met) (with W-96). H260 serves as a coordination point for heme b.

The protein belongs to the peroxidase family. Peroxidase/catalase subfamily. Homodimer or homotetramer. It depends on heme b as a cofactor. In terms of processing, formation of the three residue Trp-Tyr-Met cross-link is important for the catalase, but not the peroxidase activity of the enzyme.

It catalyses the reaction H2O2 + AH2 = A + 2 H2O. The catalysed reaction is 2 H2O2 = O2 + 2 H2O. Its function is as follows. Bifunctional enzyme with both catalase and broad-spectrum peroxidase activity. This chain is Catalase-peroxidase, found in Mesorhizobium japonicum (strain LMG 29417 / CECT 9101 / MAFF 303099) (Mesorhizobium loti (strain MAFF 303099)).